Reading from the N-terminus, the 193-residue chain is ATP-dependent Clp protease proteolytic subunit 1 (193 aa).

S98 acts as the Nucleophile in catalysis. H123 is an active-site residue.

This sequence belongs to the peptidase S14 family. In terms of assembly, fourteen ClpP subunits assemble into 2 heptameric rings which stack back to back to give a disk-like structure with a central cavity, resembling the structure of eukaryotic proteasomes.

It is found in the cytoplasm. The enzyme catalyses Hydrolysis of proteins to small peptides in the presence of ATP and magnesium. alpha-casein is the usual test substrate. In the absence of ATP, only oligopeptides shorter than five residues are hydrolyzed (such as succinyl-Leu-Tyr-|-NHMec, and Leu-Tyr-Leu-|-Tyr-Trp, in which cleavage of the -Tyr-|-Leu- and -Tyr-|-Trp bonds also occurs).. Functionally, cleaves peptides in various proteins in a process that requires ATP hydrolysis. Has a chymotrypsin-like activity. Plays a major role in the degradation of misfolded proteins. The protein is ATP-dependent Clp protease proteolytic subunit 1 of Bacillus cereus (strain ATCC 10987 / NRS 248).